We begin with the raw amino-acid sequence, 273 residues long: Ribosomal RNA small subunit methyltransferase A (273 aa).

6 residues coordinate S-adenosyl-L-methionine: Asn18, Leu20, Gly45, Glu66, Asp91, and Asn113.

It belongs to the class I-like SAM-binding methyltransferase superfamily. rRNA adenine N(6)-methyltransferase family. RsmA subfamily.

The protein resides in the cytoplasm. It carries out the reaction adenosine(1518)/adenosine(1519) in 16S rRNA + 4 S-adenosyl-L-methionine = N(6)-dimethyladenosine(1518)/N(6)-dimethyladenosine(1519) in 16S rRNA + 4 S-adenosyl-L-homocysteine + 4 H(+). Functionally, specifically dimethylates two adjacent adenosines (A1518 and A1519) in the loop of a conserved hairpin near the 3'-end of 16S rRNA in the 30S particle. May play a critical role in biogenesis of 30S subunits. This is Ribosomal RNA small subunit methyltransferase A from Escherichia coli (strain 55989 / EAEC).